Consider the following 361-residue polypeptide: Core-capsid bridging protein (361 aa).

Residues 311–321 are compositionally biased toward basic residues; it reads RRRRVARRSKS. Positions 311–331 are disordered; it reads RRRRVARRSKSTGRFVAAPRK.

This sequence belongs to the adenoviridae core-capsid bridging protein family. In terms of assembly, monomer. Homodimer. Exists in equilibrium between monomers and dimers in solution. Interacts with the histone-like nucleoprotein; this interactions bridge the virus core to the capsid. Interacts with core protein X; this interactions bridge the virus core to the capsid. Interacts with the endosome lysis protein VI; this interactions bridge the virus core to the capsid. Interacts with the peripentonal hexons. Interacts with host NPM1; this interaction might play a role in virus assembly.

The protein localises to the virion. It is found in the host nucleus. The protein resides in the host nucleolus. Its function is as follows. Associates loosely with the viral DNA to form an outer shell around the nucleoprotein-DNA complex and links it with the capsid by binding the endosome lysis protein. Dissociates from the viral genome during entry. Might be involved in nuclear capsid assembly of the viral particles through its association with NPM1/nucleophosmin. The chain is Core-capsid bridging protein from Bovine adenovirus 2 (BAdV-2).